Reading from the N-terminus, the 520-residue chain is Nonsense-mediated mRNA decay factor SMG9 (520 aa).

The segment at 1–143 (MSESGHSQPG…KGEKEGQRPT (143 aa)) is disordered. An N-acetylserine modification is found at Ser-2. Phosphoserine is present on residues Ser-2, Ser-4, Ser-7, Ser-32, and Ser-53. Positions 36–53 (GRERDYIAPWERERRDGS) are enriched in basic and acidic residues. Pro residues-rich tracts occupy residues 78-94 (QPPPSTAPAAPPAPAPL) and 122-133 (TAPPPPTAPAPP). Residue Ser-451 is modified to Phosphoserine.

The protein belongs to the SMG9 family. Self-associates to form homodimers and forms heterodimers with SMG8; these assembly forms may represent SMG1C intermediate forms. Component of the SMG1C complex composed of SMG1, SMG8 and SMG9. Interacts with DHX34; the interaction is RNA-independent. In terms of processing, phosphorylated by SMG1.

Its function is as follows. Involved in nonsense-mediated decay (NMD) of mRNAs containing premature stop codons. Is recruited by release factors to stalled ribosomes together with SMG1 and SMG8 (forming the SMG1C protein kinase complex) and, in the SMG1C complex, is required for the efficient association between SMG1 and SMG8. Plays a role in brain, heart, and eye development. The chain is Nonsense-mediated mRNA decay factor SMG9 from Mus musculus (Mouse).